The chain runs to 151 residues: Ribosome maturation factor RimP (151 aa).

Belongs to the RimP family.

The protein resides in the cytoplasm. Functionally, required for maturation of 30S ribosomal subunits. This Alcanivorax borkumensis (strain ATCC 700651 / DSM 11573 / NCIMB 13689 / SK2) protein is Ribosome maturation factor RimP.